Here is a 34-residue protein sequence, read N- to C-terminus: Photosystem II reaction center protein M (34 aa).

A helical transmembrane segment spans residues 5-25 (ILAFIATALFILIPTAFSLIL).

The protein belongs to the PsbM family. In terms of assembly, PSII is composed of 1 copy each of membrane proteins PsbA, PsbB, PsbC, PsbD, PsbE, PsbF, PsbH, PsbI, PsbJ, PsbK, PsbL, PsbM, PsbT, PsbX, PsbY, PsbZ, Psb30/Ycf12, at least 3 peripheral proteins of the oxygen-evolving complex and a large number of cofactors. It forms dimeric complexes.

It localises to the plastid. The protein resides in the chloroplast thylakoid membrane. Functionally, one of the components of the core complex of photosystem II (PSII). PSII is a light-driven water:plastoquinone oxidoreductase that uses light energy to abstract electrons from H(2)O, generating O(2) and a proton gradient subsequently used for ATP formation. It consists of a core antenna complex that captures photons, and an electron transfer chain that converts photonic excitation into a charge separation. This subunit is found at the monomer-monomer interface. The polypeptide is Photosystem II reaction center protein M (Huperzia lucidula (Shining clubmoss)).